The primary structure comprises 241 residues: Large ribosomal subunit protein uL3 (241 aa).

Disordered stretches follow at residues 139 to 166 (VSHR…PGHM) and 214 to 241 (ADAP…QEGA). Gln151 bears the N5-methylglutamine mark. Positions 229–241 (AAAEAPAAEQEGA) are enriched in low complexity.

As to quaternary structure, part of the 50S ribosomal subunit. Forms a cluster with proteins L14 and L19. Methylated, on either Lys-155 or Lys-158. Post-translationally, methylated by PrmB.

One of the primary rRNA binding proteins, it binds directly near the 3'-end of the 23S rRNA, where it nucleates assembly of the 50S subunit. This chain is Large ribosomal subunit protein uL3, found in Rhodopseudomonas palustris (strain ATCC BAA-98 / CGA009).